A 315-amino-acid polypeptide reads, in one-letter code: Protein-methionine-sulfoxide reductase catalytic subunit MsrP (315 aa).

The tat-type signal signal peptide spans 1-45 (MPSYRPPKIASSEITPRQVYLRRREFLGAATLGAMALYGAGKASA). Residues asparagine 71, 74–75 (YE), cysteine 129, threonine 164, asparagine 214, arginine 219, and 230–232 (GIK) contribute to the Mo-molybdopterin site.

Belongs to the MsrP family. Heterodimer of a catalytic subunit (MsrP) and a heme-binding subunit (MsrQ). Requires Mo-molybdopterin as cofactor. Post-translationally, predicted to be exported by the Tat system. The position of the signal peptide cleavage has not been experimentally proven.

It is found in the periplasm. It carries out the reaction L-methionyl-[protein] + a quinone + H2O = L-methionyl-(S)-S-oxide-[protein] + a quinol. The enzyme catalyses L-methionyl-[protein] + a quinone + H2O = L-methionyl-(R)-S-oxide-[protein] + a quinol. In terms of biological role, part of the MsrPQ system that repairs oxidized periplasmic proteins containing methionine sulfoxide residues (Met-O), using respiratory chain electrons. Thus protects these proteins from oxidative-stress damage caused by reactive species of oxygen and chlorine generated by the host defense mechanisms. MsrPQ is essential for the maintenance of envelope integrity under bleach stress, rescuing a wide series of structurally unrelated periplasmic proteins from methionine oxidation. The catalytic subunit MsrP is non-stereospecific, being able to reduce both (R-) and (S-) diastereoisomers of methionine sulfoxide. The protein is Protein-methionine-sulfoxide reductase catalytic subunit MsrP of Rhizobium etli (strain ATCC 51251 / DSM 11541 / JCM 21823 / NBRC 15573 / CFN 42).